The primary structure comprises 448 residues: MSLIASIYAREVLDSRGNPTVEAEVYSEDGFFGRGIVPSGASTGEHEAVELRDGDKSRYLGKGVTKAVANVNGAIAEALIGKFDVADQRGIDLAMIALDGTPNKGKLGANAILSVSIATARAAAEEAGLPLYQYLGGPNSYVLPTPMMNVINGGVHSDNKVDFQEFMIMPVGAKTVKEAIRMGSETFHNLKKLLEADGKNTSVGDEGGFAPDFANNEEPLQYLVKAIQAAGYKPGKDIALATDVAASELYDADTKKYKLKWSTGEEFTAPEFEKYIEGLVAKYPIVSVEDPLDENEWDDWVEVTKELGKKVQIVGDDFFVTNTDYLKRGIEMGAANAILIKLNQIGTLTETFEAIEMAKEAGYTAIVSHRSGETEDTTIADLVVATNAGQIKTGSMSRTDRIAKYNQLMRIEDELNQGEPEGVSIYKGINSFYNLNADAKKEIQSHQG.

Gln-164 contributes to the (2R)-2-phosphoglycerate binding site. Residue Glu-206 is the Proton donor of the active site. Mg(2+)-binding residues include Asp-243, Glu-289, and Asp-316. (2R)-2-phosphoglycerate is bound by residues Lys-341, Arg-370, Ser-371, and Lys-392. Catalysis depends on Lys-341, which acts as the Proton acceptor.

Belongs to the enolase family. The cofactor is Mg(2+).

It localises to the cytoplasm. The protein localises to the secreted. Its subcellular location is the cell surface. The enzyme catalyses (2R)-2-phosphoglycerate = phosphoenolpyruvate + H2O. The protein operates within carbohydrate degradation; glycolysis; pyruvate from D-glyceraldehyde 3-phosphate: step 4/5. In terms of biological role, catalyzes the reversible conversion of 2-phosphoglycerate (2-PG) into phosphoenolpyruvate (PEP). It is essential for the degradation of carbohydrates via glycolysis. The protein is Enolase of Oenococcus oeni (strain ATCC BAA-331 / PSU-1).